The primary structure comprises 509 residues: Flotillin-like protein FloT (509 aa).

Over 1–3 (MTM) the chain is Cytoplasmic. An intramembrane segment occupies 4 to 24 (PIIMIIGVVFFLLIALIAVFI). Over 25-509 (TKYRTAGPDE…KEAKTIQKSE (485 aa)) the chain is Cytoplasmic. The interval 119 to 301 (AAEQFLGKSK…KIIERQKQIE (183 aa)) is PHB domain. A required for correct localization region spans residues 203–509 (RIAQVKRDAD…KEAKTIQKSE (307 aa)). Short sequence motifs (EA repeat) lie at residues 342 to 344 (AEA), 357 to 360 (AEAE), 370 to 373 (AEAE), and 390 to 394 (AEAEA). A not required for correct localization region spans residues 485–509 (KGNVKQSINELTNEIKEAKTIQKSE).

This sequence belongs to the band 7/mec-2 family. Flotillin subfamily. In terms of assembly, homooligomerizes. Oligomerizes in very large complexes in vitro. Interacts with FloA, FtsH, FtsX, OppA, SdhA and SecY in detergent-resistant membrane (DRM) fractions. Interacts with FtsH at midcell. Interacts with FloA. Interacts in vivo with KinC, FloA, FtsH and ResE. Interacts with ResE, colocalizes with ResE in FloT-only membrane rafts. Another study shows nearly complete colocalization with NfeD2, but only minor colocalization with FtsH or KinC.

It is found in the cell membrane. It localises to the membrane raft. In terms of biological role, found in functional membrane microdomains (FMM) that may be equivalent to eukaryotic membrane rafts. FMMs are highly dynamic and increase in number as cells age. FloA and FloT function is partially redundant; double deletions have marked synthetic phenotypes. Flotillins are thought to be important factors in membrane fluidity, especially during periods of rapid growth in rich media. Whether specific proteins are associated with FMMs is controversial; in one study FloT rafts have been shown to include proteins involved in adaptation to stationary phase, while FloA-FloT rafts include proteins involved in differentiation including sporulation, biofilm formation and DNA uptake competence. Another (more finely resolved) study only showed association of NfeD2 with FloT rafts of all the proteins examined. Aids homooligomerization of KinC and KinD but not KinB, may prevent incorrect hetero-association of the above kinases. Simultaneous overexpression of both FloA and FloT leads to defects in cell division and differentiation, in part caused by stabilization of FtsH and its subsequent increased ability to degrade proteins. Cells make more biofilm, are about half as long, have less EzrA and more frequent Z-rings. Involved in spatial organization of membranes, perhaps recruiting proteins (e.g. NfeD2) to specific membrane regions. Plays a role in phosphorylation of master regulator Spo0A, an early sporulation event. Plays a non-redundant role with dynamin-like protein A (dynA) in membrane dynamics and cell shape. In Bacillus subtilis (strain 168), this protein is Flotillin-like protein FloT.